Reading from the N-terminus, the 128-residue chain is Phosphoribosyl-AMP cyclohydrolase (128 aa).

Residue Asp-86 participates in Mg(2+) binding. Residue Cys-87 coordinates Zn(2+). 2 residues coordinate Mg(2+): Asp-88 and Asp-90. 2 residues coordinate Zn(2+): Cys-103 and Cys-110.

The protein belongs to the PRA-CH family. As to quaternary structure, homodimer. Requires Mg(2+) as cofactor. The cofactor is Zn(2+).

The protein localises to the cytoplasm. The enzyme catalyses 1-(5-phospho-beta-D-ribosyl)-5'-AMP + H2O = 1-(5-phospho-beta-D-ribosyl)-5-[(5-phospho-beta-D-ribosylamino)methylideneamino]imidazole-4-carboxamide. Its pathway is amino-acid biosynthesis; L-histidine biosynthesis; L-histidine from 5-phospho-alpha-D-ribose 1-diphosphate: step 3/9. Functionally, catalyzes the hydrolysis of the adenine ring of phosphoribosyl-AMP. In Roseobacter denitrificans (strain ATCC 33942 / OCh 114) (Erythrobacter sp. (strain OCh 114)), this protein is Phosphoribosyl-AMP cyclohydrolase.